Here is a 150-residue protein sequence, read N- to C-terminus: 6,7-dimethyl-8-ribityllumazine synthase (150 aa).

5-amino-6-(D-ribitylamino)uracil-binding positions include Phe-11, 43 to 45, and 67 to 69; these read VFD and AVI. Residue 72 to 73 coordinates (2S)-2-hydroxy-3-oxobutyl phosphate; sequence AT. The Proton donor role is filled by His-75. Leu-100 is a binding site for 5-amino-6-(D-ribitylamino)uracil. Arg-115 lines the (2S)-2-hydroxy-3-oxobutyl phosphate pocket.

It belongs to the DMRL synthase family.

The enzyme catalyses (2S)-2-hydroxy-3-oxobutyl phosphate + 5-amino-6-(D-ribitylamino)uracil = 6,7-dimethyl-8-(1-D-ribityl)lumazine + phosphate + 2 H2O + H(+). Its pathway is cofactor biosynthesis; riboflavin biosynthesis; riboflavin from 2-hydroxy-3-oxobutyl phosphate and 5-amino-6-(D-ribitylamino)uracil: step 1/2. Catalyzes the formation of 6,7-dimethyl-8-ribityllumazine by condensation of 5-amino-6-(D-ribitylamino)uracil with 3,4-dihydroxy-2-butanone 4-phosphate. This is the penultimate step in the biosynthesis of riboflavin. The chain is 6,7-dimethyl-8-ribityllumazine synthase from Pyrobaculum calidifontis (strain DSM 21063 / JCM 11548 / VA1).